The primary structure comprises 302 residues: tRNA pseudouridine synthase B (302 aa).

A substrate-binding site is contributed by histidine 40. Residue aspartate 45 is the Nucleophile of the active site. Tyrosine 73, tyrosine 178, and leucine 199 together coordinate substrate.

The protein belongs to the pseudouridine synthase TruB family. Type 1 subfamily.

It carries out the reaction uridine(55) in tRNA = pseudouridine(55) in tRNA. Functionally, responsible for synthesis of pseudouridine from uracil-55 in the psi GC loop of transfer RNAs. This chain is tRNA pseudouridine synthase B, found in Buchnera aphidicola subsp. Baizongia pistaciae (strain Bp).